A 438-amino-acid polypeptide reads, in one-letter code: Putative truncated GMC-type inactive oxidoreductase L894 (438 aa).

The first 26 residues, 1-26 (MYVFLLFSRYKIFYVYIKKMAHRSRC), serve as a signal peptide directing secretion. An FAD-binding site is contributed by 79–109 (DIVIIGAGAAGCVLAYYLTKFSDLKIILLEA).

It belongs to the GMC oxidoreductase family. Requires FAD as cofactor.

The protein resides in the virion. This chain is Putative truncated GMC-type inactive oxidoreductase L894, found in Acanthamoeba polyphaga (Amoeba).